Reading from the N-terminus, the 548-residue chain is Protein swallow (548 aa).

Disordered stretches follow at residues 67 to 109, 184 to 206, and 358 to 428; these read AKTC…GRSS, NCQT…SSSF, and FSSV…ELIS. Residues 79-91 are compositionally biased toward acidic residues; the sequence is QEDEDDYDEDVDG. A compositionally biased stretch (low complexity) spans 189 to 205; sequence SNSDSNYNSNSNNSSSS. Phosphoserine is present on residues Ser-362 and Ser-368. Residues 388–402 show a composition bias toward polar residues; that stretch reads APNNSETSQPSSNDS. Positions 406-420 are enriched in basic and acidic residues; that stretch reads VEAHEEERPSSRRQW. Residues Ser-463, Ser-471, Ser-475, Ser-483, Ser-485, and Ser-487 each carry the phosphoserine modification.

As to quaternary structure, may be a homo- or heterodimer.

It localises to the nucleus. Its function is as follows. Has a role in localizing bicoid mRNA at the anterior margin of the oocyte during oogenesis, and a poorly characterized role in nuclear divisions in early embryogenesis. The polypeptide is Protein swallow (swa) (Drosophila melanogaster (Fruit fly)).